The sequence spans 90 residues: Essential MCU regulator, mitochondrial (90 aa).

The helical transmembrane segment at 49 to 68 (GVLKLIFVSASSLYIGGLIA) threads the bilayer.

The protein belongs to the SMDT1/EMRE family.

Its subcellular location is the mitochondrion inner membrane. Essential regulatory subunit of the mitochondrial calcium uniporter (mcu-1) channel, a protein that mediates calcium uptake into mitochondria. This chain is Essential MCU regulator, mitochondrial, found in Caenorhabditis elegans.